The primary structure comprises 218 residues: Kynurenine formamidase (218 aa).

Tryptophan 27 provides a ligand contact to substrate. Residues histidine 57, histidine 61, and aspartate 63 each contribute to the Zn(2+) site. Histidine 67 acts as the Proton donor/acceptor in catalysis. Residues histidine 169 and glutamate 181 each coordinate Zn(2+).

The protein belongs to the Cyclase 1 superfamily. KynB family. In terms of assembly, homodimer. Requires Zn(2+) as cofactor.

It carries out the reaction N-formyl-L-kynurenine + H2O = L-kynurenine + formate + H(+). The protein operates within amino-acid degradation; L-tryptophan degradation via kynurenine pathway; L-kynurenine from L-tryptophan: step 2/2. With respect to regulation, inhibited by EDTA. Insensitive to phenylmethylsulfonyl fluoride (PMSF). Functionally, catalyzes the hydrolysis of N-formyl-L-kynurenine to L-kynurenine, the second step in the kynurenine pathway of tryptophan degradation. This Cupriavidus metallidurans (strain ATCC 43123 / DSM 2839 / NBRC 102507 / CH34) (Ralstonia metallidurans) protein is Kynurenine formamidase.